The sequence spans 162 residues: MEKIFERLMYASRWIMAPIYLGLSLVLLGLGIKFFQEIFHVLPIIFEMREVDLVLVTLSLIDITLVGGLIVMVMFSGYENFVSQLDVGEDSEKLSWLGKLDSGSLKNKVAASIVAISSIHLLKIFMNVENISNDKIMWYLLIHITFVLSAFAMGYLDKITRK.

Transmembrane regions (helical) follow at residues 15-35 (IMAP…IKFF), 53-73 (LVLV…IVMV), and 136-156 (IMWY…MGYL).

Belongs to the UPF0114 family.

Its subcellular location is the cell membrane. The polypeptide is UPF0114 protein Sputw3181_3501 (Shewanella sp. (strain W3-18-1)).